The following is a 420-amino-acid chain: Calsequestrin-1 (420 aa).

Positions 1–22 (MKGPWLVLAALCLSLANLGPRG) are cleaved as a signal peptide. A glycan (N-linked (GlcNAc...) asparagine) is linked at asparagine 338. Positions 369 to 420 (LEGEVNTEDDDDDDDDDDDDDDDDDDDDDDDDDDDDDDDDDDDDDDDDDDDD) are disordered.

The protein belongs to the calsequestrin family. As to quaternary structure, monomer; increases in response to a depletion of intracellular calcium. Homodimer. Homotetramer and homopolymer. Can form linear homooligomers. Ca(2+) ions promote oligomerization. In terms of tissue distribution, detected in skeletal muscle (at protein level). Detected in skeletal muscle.

Its subcellular location is the endoplasmic reticulum. The protein resides in the sarcoplasmic reticulum. The protein localises to the sarcoplasmic reticulum lumen. It localises to the sarcoplasmic reticulum membrane. It is found in the mitochondrion matrix. Its function is as follows. Calsequestrin is a high-capacity, moderate affinity, calcium-binding protein and thus acts as an internal calcium store in muscle. Calcium ions are bound by clusters of acidic residues at the protein surface, often at the interface between subunits. Can bind around 80 Ca(2+) ions. Regulates the release of lumenal Ca(2+) via the calcium release channel RYR1; this plays an important role in triggering muscle contraction. Negatively regulates store-operated Ca(2+) entry (SOCE) activity. This chain is Calsequestrin-1, found in Pelophylax lessonae (Pool frog).